The following is a 921-amino-acid chain: DNA ligase (921 aa).

NAD(+) is bound by residues 90 to 94, 139 to 140, and Glu-173; these read DAAYD and SL. Residue Lys-175 is the N6-AMP-lysine intermediate of the active site. Arg-196, Glu-235, Lys-360, and Lys-384 together coordinate NAD(+). Zn(2+) is bound by residues Cys-481, Cys-484, Cys-500, and Cys-506. Residues 663-688 are disordered; sequence EAAIESAETQGGAASETTGAPTGAEA. The 83-residue stretch at 839–921 folds into the BRCT domain; that stretch reads SLPQTLAGKT…AQLLETGSID (83 aa).

The protein belongs to the NAD-dependent DNA ligase family. LigA subfamily. Mg(2+) is required as a cofactor. Requires Mn(2+) as cofactor.

The catalysed reaction is NAD(+) + (deoxyribonucleotide)n-3'-hydroxyl + 5'-phospho-(deoxyribonucleotide)m = (deoxyribonucleotide)n+m + AMP + beta-nicotinamide D-nucleotide.. Its function is as follows. DNA ligase that catalyzes the formation of phosphodiester linkages between 5'-phosphoryl and 3'-hydroxyl groups in double-stranded DNA using NAD as a coenzyme and as the energy source for the reaction. It is essential for DNA replication and repair of damaged DNA. In Bifidobacterium longum subsp. infantis (strain ATCC 15697 / DSM 20088 / JCM 1222 / NCTC 11817 / S12), this protein is DNA ligase.